The sequence spans 126 residues: MIRTMLQGKLHRVKVTHADLHYEGSCAIDQDFLDAAGILENEAIDIWNVTNGKRFSTYAIAAERGSRIISVNGAAAHCASVGDIVIIASFVTMPDEEARTWRPNVAYFEGDNEMKRTAKAIPVQVA.

Serine 25 serves as the catalytic Schiff-base intermediate with substrate; via pyruvic acid. Residue serine 25 is modified to Pyruvic acid (Ser). Threonine 57 serves as a coordination point for substrate. The Proton donor role is filled by tyrosine 58. 73 to 75 is a substrate binding site; that stretch reads GAA.

The protein belongs to the PanD family. Heterooctamer of four alpha and four beta subunits. Pyruvate is required as a cofactor. Is synthesized initially as an inactive proenzyme, which is activated by self-cleavage at a specific serine bond to produce a beta-subunit with a hydroxyl group at its C-terminus and an alpha-subunit with a pyruvoyl group at its N-terminus.

It is found in the cytoplasm. It catalyses the reaction L-aspartate + H(+) = beta-alanine + CO2. It participates in cofactor biosynthesis; (R)-pantothenate biosynthesis; beta-alanine from L-aspartate: step 1/1. Functionally, catalyzes the pyruvoyl-dependent decarboxylation of aspartate to produce beta-alanine. The polypeptide is Aspartate 1-decarboxylase (Escherichia coli O6:H1 (strain CFT073 / ATCC 700928 / UPEC)).